The chain runs to 142 residues: ATP synthase epsilon chain (142 aa).

It belongs to the ATPase epsilon chain family. F-type ATPases have 2 components, CF(1) - the catalytic core - and CF(0) - the membrane proton channel. CF(1) has five subunits: alpha(3), beta(3), gamma(1), delta(1), epsilon(1). CF(0) has three main subunits: a, b and c.

The protein resides in the cell inner membrane. In terms of biological role, produces ATP from ADP in the presence of a proton gradient across the membrane. This chain is ATP synthase epsilon chain, found in Histophilus somni (strain 2336) (Haemophilus somnus).